The following is a 1003-amino-acid chain: Glycine--tRNA ligase (1003 aa).

Residues 1–310 (MSSQPLTLQT…VTPKKIPTIC (310 aa)) are glycine--tRNA ligase alpha subunit. The tract at residues 311 to 1003 (QPEDFLLEIG…CFGFYAWGVL (693 aa)) is glycine--tRNA ligase beta subunit.

It belongs to the class-II aminoacyl-tRNA synthetase family.

It is found in the cytoplasm. It catalyses the reaction tRNA(Gly) + glycine + ATP = glycyl-tRNA(Gly) + AMP + diphosphate. In Chlamydia trachomatis serovar D (strain ATCC VR-885 / DSM 19411 / UW-3/Cx), this protein is Glycine--tRNA ligase (glyQS).